Reading from the N-terminus, the 788-residue chain is Serine/threonine-protein kinase MARK2 (788 aa).

The interval Met-1–Glu-46 is disordered. Positions Lys-27–Asp-45 are enriched in polar residues. Ser-40 carries the post-translational modification Phosphoserine. One can recognise a Protein kinase domain in the interval Tyr-53–Met-304. Thr-58 carries the post-translational modification Phosphothreonine; by autocatalysis. ATP contacts are provided by residues Ile-59–Val-67 and Lys-82. 3 positions are modified to phosphoserine; by CaMK1: Ser-91, Ser-92, and Ser-93. The Proton acceptor role is filled by Asp-175. Thr-208 bears the Phosphothreonine; by LKB1 and TAOK1 mark. Phosphoserine; by GSK3-beta is present on Ser-212. Residue Ser-274 is modified to Phosphoserine; by autocatalysis. Residue Thr-275 is modified to Phosphothreonine; by autocatalysis. Thr-294 is modified (phosphothreonine; by CaMK1). In terms of domain architecture, UBA spans Tyr-323 to Gly-362. Residues Ile-373–Gly-632 form a disordered region. Lys-376 and Ser-409 each carry phosphoserine. Over residues Pro-418–Ala-432 the composition is skewed to polar residues. The span at Glu-433–Arg-445 shows a compositional bias: basic and acidic residues. The residue at position 456 (Ser-456) is a Phosphoserine. Residue Thr-467 is modified to Phosphothreonine. Positions Thr-467 to Ser-486 are enriched in polar residues. Ser-486 and Ser-493 each carry phosphoserine. Positions Gly-495–Asp-504 are enriched in polar residues. Low complexity predominate over residues Ser-511 to Ala-525. Phosphoserine occurs at positions 569, 571, and 592. The residue at position 596 (Thr-596) is a Phosphothreonine; by PKC/PRKCZ. A phosphoserine mark is found at Ser-619 and Ser-722. Positions Thr-739–Leu-788 constitute a KA1 domain.

The protein belongs to the protein kinase superfamily. CAMK Ser/Thr protein kinase family. SNF1 subfamily. As to quaternary structure, homodimer. Interacts with PAK5; leading to inhibit the protein kinase activity. Interacts with MAPT/TAU. Interacts with MTCL1 isoform 1; the interaction is direct and increases MARK2 microtubule-binding ability. Interacts (when phosphorylated at Thr-596) with YWHAZ. Interacts with YWHAB, YWHAG and YWHAQ. In terms of assembly, (Microbial infection) In case of infection, interacts with H.pylori CagA, leading to inhibit kinase activity and junctional and polarity defects. Mg(2+) is required as a cofactor. Post-translationally, autophosphorylated. Phosphorylated at Thr-208 by STK11/LKB1 in complex with STE20-related adapter-alpha (STRADA) pseudo kinase and CAB39. Phosphorylation at Thr-208 by TAOK1 activates the kinase activity, leading to phosphorylation and detachment of MAPT/TAU from microtubules. Phosphorylation at Ser-212 by GSK3-beta (GSK3B) inhibits the kinase activity. Phosphorylation by CaMK1 promotes activity and is required to promote neurite outgrowth. Phosphorylation at Thr-596 by PRKCZ/aPKC in polarized epithelial cells inhibits the kinase activity and promotes binding to 14-3-3 protein YWHAZ, leading to relocation from cell membrane to cytoplasm. In terms of tissue distribution, high levels of expression in heart, brain, skeletal muscle and pancreas, lower levels observed in lung, liver and kidney.

Its subcellular location is the cell membrane. The protein localises to the cytoplasm. The protein resides in the lateral cell membrane. It is found in the cytoskeleton. It localises to the cell projection. Its subcellular location is the dendrite. The catalysed reaction is L-seryl-[protein] + ATP = O-phospho-L-seryl-[protein] + ADP + H(+). It carries out the reaction L-threonyl-[protein] + ATP = O-phospho-L-threonyl-[protein] + ADP + H(+). It catalyses the reaction L-seryl-[tau protein] + ATP = O-phospho-L-seryl-[tau protein] + ADP + H(+). The enzyme catalyses L-threonyl-[tau protein] + ATP = O-phospho-L-threonyl-[tau protein] + ADP + H(+). With respect to regulation, inhibited by PAK5; inhibition is independent of the kinase activity of PAK5. Activated by phosphorylation on Thr-208. Inhibited by phosphorylation at Ser-212 and Thr-596. Inhibited by hymenialdisine. Specifically inhibited by the H.pylori CagA peptide FPLKRHDKVDDLSK that mimics host substrates and binds to the kinase substrate-binding site. Functionally, serine/threonine-protein kinase. Involved in cell polarity and microtubule dynamics regulation. Phosphorylates CRTC2/TORC2, DCX, HDAC7, KIF13B, MAP2, MAP4 and RAB11FIP2. Phosphorylates the microtubule-associated protein MAPT/TAU. Plays a key role in cell polarity by phosphorylating the microtubule-associated proteins MAP2, MAP4 and MAPT/TAU at KXGS motifs, causing detachment from microtubules, and their disassembly. Regulates epithelial cell polarity by phosphorylating RAB11FIP2. Involved in the regulation of neuronal migration through its dual activities in regulating cellular polarity and microtubule dynamics, possibly by phosphorylating and regulating DCX. Regulates axogenesis by phosphorylating KIF13B, promoting interaction between KIF13B and 14-3-3 and inhibiting microtubule-dependent accumulation of KIF13B. Also required for neurite outgrowth and establishment of neuronal polarity. Regulates localization and activity of some histone deacetylases by mediating phosphorylation of HDAC7, promoting subsequent interaction between HDAC7 and 14-3-3 and export from the nucleus. Also acts as a positive regulator of the Wnt signaling pathway, probably by mediating phosphorylation of dishevelled proteins (DVL1, DVL2 and/or DVL3). Modulates the developmental decision to build a columnar versus a hepatic epithelial cell apparently by promoting a switch from a direct to a transcytotic mode of apical protein delivery. Essential for the asymmetric development of membrane domains of polarized epithelial cells. This Homo sapiens (Human) protein is Serine/threonine-protein kinase MARK2.